A 73-amino-acid chain; its full sequence is Large ribosomal subunit protein bL31 (73 aa).

4 residues coordinate Zn(2+): Cys-16, Cys-18, Cys-36, and Cys-39.

This sequence belongs to the bacterial ribosomal protein bL31 family. Type A subfamily. As to quaternary structure, part of the 50S ribosomal subunit. Requires Zn(2+) as cofactor.

Functionally, binds the 23S rRNA. The polypeptide is Large ribosomal subunit protein bL31 (Desulfosudis oleivorans (strain DSM 6200 / JCM 39069 / Hxd3) (Desulfococcus oleovorans)).